The chain runs to 344 residues: Deoxyhypusine hydroxylase (344 aa).

2 HEAT-like PBS-type repeats span residues 81–107 (LKHELAYCLGQTANGAAIPYLTAVLED) and 115–140 (RHEAAEALGALGDVASLGVLKRFRDR). Residues His-83, Glu-84, His-116, and Glu-117 each contribute to the Fe cation site. A disordered region spans residues 169–188 (EKLRASDFSSVDPAPPTAQG). HEAT-like PBS-type repeat units lie at residues 210–240 (KRYRAMFALRDLASPPDLPTAVPAVLALAKG), 248–274 (FRHEIAFVFGQLAHPASIPALTEALSN), and 281–308 (VRHEAAEALGSLGDEEGVEETLRKFLHD). Fe cation is bound by residues His-250, Glu-251, His-283, and Glu-284.

Belongs to the deoxyhypusine hydroxylase family. Requires Fe(2+) as cofactor.

The protein localises to the cytoplasm. The protein resides in the nucleus. It carries out the reaction [eIF5A protein]-deoxyhypusine + AH2 + O2 = [eIF5A protein]-hypusine + A + H2O. Its pathway is protein modification; eIF5A hypusination. Its function is as follows. Catalyzes the hydroxylation of the N(6)-(4-aminobutyl)-L-lysine intermediate to form hypusine, an essential post-translational modification only found in mature eIF-5A factor. The protein is Deoxyhypusine hydroxylase of Chaetomium globosum (strain ATCC 6205 / CBS 148.51 / DSM 1962 / NBRC 6347 / NRRL 1970) (Soil fungus).